A 147-amino-acid polypeptide reads, in one-letter code: Small ribosomal subunit protein uS13 (147 aa).

The segment at 115–147 (SYKGRRHEAGLPVRGQRTKSTFRNSSSVGVKRS) is disordered. A compositionally biased stretch (polar residues) spans 132 to 147 (TKSTFRNSSSVGVKRS).

This sequence belongs to the universal ribosomal protein uS13 family. Part of the 30S ribosomal subunit. Forms a loose heterodimer with protein S19. Forms two bridges to the 50S subunit in the 70S ribosome.

Located at the top of the head of the 30S subunit, it contacts several helices of the 16S rRNA. In the 70S ribosome it contacts the 23S rRNA (bridge B1a) and protein L5 of the 50S subunit (bridge B1b), connecting the 2 subunits; these bridges are implicated in subunit movement. This Methanobrevibacter smithii (strain ATCC 35061 / DSM 861 / OCM 144 / PS) protein is Small ribosomal subunit protein uS13.